The following is a 358-amino-acid chain: uncharacterized protein (358 aa).

This sequence belongs to the serpin family. Poxviruses subfamily.

This is an uncharacterized protein from Fowlpox virus (strain NVSL) (FPV).